A 388-amino-acid polypeptide reads, in one-letter code: Lipoyl synthase, mitochondrial (388 aa).

Residues 1–18 constitute a mitochondrion transit peptide; it reads MRLTTVQRRFLVSTKAKV. Residues 22–39 show a composition bias toward low complexity; sequence SISSTANTGSASAGAPNG. Residues 22 to 43 form a disordered region; it reads SISSTANTGSASAGAPNGQTRR. [4Fe-4S] cluster-binding residues include Cys-120, Cys-125, Cys-131, Cys-151, Cys-155, Cys-158, and Ser-366. Positions 134–355 constitute a Radical SAM core domain; that stretch reads GKDKSKATAT…KDKAKEMGFL (222 aa).

It belongs to the radical SAM superfamily. Lipoyl synthase family. [4Fe-4S] cluster is required as a cofactor.

It localises to the mitochondrion. It catalyses the reaction [[Fe-S] cluster scaffold protein carrying a second [4Fe-4S](2+) cluster] + N(6)-octanoyl-L-lysyl-[protein] + 2 oxidized [2Fe-2S]-[ferredoxin] + 2 S-adenosyl-L-methionine + 4 H(+) = [[Fe-S] cluster scaffold protein] + N(6)-[(R)-dihydrolipoyl]-L-lysyl-[protein] + 4 Fe(3+) + 2 hydrogen sulfide + 2 5'-deoxyadenosine + 2 L-methionine + 2 reduced [2Fe-2S]-[ferredoxin]. Its pathway is protein modification; protein lipoylation via endogenous pathway; protein N(6)-(lipoyl)lysine from octanoyl-[acyl-carrier-protein]: step 2/2. Functionally, catalyzes the radical-mediated insertion of two sulfur atoms into the C-6 and C-8 positions of the octanoyl moiety bound to the lipoyl domains of lipoate-dependent enzymes, thereby converting the octanoylated domains into lipoylated derivatives. The protein is Lipoyl synthase, mitochondrial of Candida glabrata (strain ATCC 2001 / BCRC 20586 / JCM 3761 / NBRC 0622 / NRRL Y-65 / CBS 138) (Yeast).